We begin with the raw amino-acid sequence, 160 residues long: MSIYHMKVRTITGKDMTLQPFAGKVLMIVNTASKCGFTSQLKQLQELYDTYQQEGLEILGFPCNQFMNQEPGEEADIQEFCETNYGVTFPMFSKVDVNGKNAHPLFVYLTEHAKGMLGTKAIKWNFTKFIVDRNGEIVGRYSPNTNPKELEDDIVKLLEQ.

Cysteine 35 is a catalytic residue.

The protein belongs to the glutathione peroxidase family.

The protein is Glutathione peroxidase homolog BsaA (bsaA) of Bacillus subtilis (strain 168).